Here is a 166-residue protein sequence, read N- to C-terminus: Regulatory protein RecX (166 aa).

It belongs to the RecX family.

It is found in the cytoplasm. Modulates RecA activity. The polypeptide is Regulatory protein RecX (Shigella boydii serotype 18 (strain CDC 3083-94 / BS512)).